The chain runs to 234 residues: uncharacterized protein (234 aa).

The 230-residue stretch at 5–234 (MELVDVWKIY…ERRGVVYGDT (230 aa)) folds into the ABC transporter domain. Residue 41-48 (GPSGSGKS) participates in ATP binding.

The protein belongs to the ABC transporter superfamily.

This is an uncharacterized protein from Thermotoga maritima (strain ATCC 43589 / DSM 3109 / JCM 10099 / NBRC 100826 / MSB8).